Reading from the N-terminus, the 578-residue chain is Glucans biosynthesis protein G (578 aa).

A signal peptide spans 1–37 (MIVSPCIAPRIPGTRLRKAMLAGVALVGLLSAGQLWA). The disordered stretch occupies residues 511–578 (VPVEAPKPAK…TWSYQLPADE (68 aa)). Basic and acidic residues predominate over residues 517–543 (KPAKDSKQDKAAAKHAHAKAEKAKAEQ). Low complexity predominate over residues 544 to 554 (PAEQPAADAAS).

The protein belongs to the OpgD/OpgG family.

It localises to the periplasm. The protein operates within glycan metabolism; osmoregulated periplasmic glucan (OPG) biosynthesis. In terms of biological role, involved in the biosynthesis of osmoregulated periplasmic glucans (OPGs). In Pseudomonas entomophila (strain L48), this protein is Glucans biosynthesis protein G.